Consider the following 502-residue polypeptide: Lysine--tRNA ligase (502 aa).

Residues Glu-413 and Glu-420 each coordinate Mg(2+).

Belongs to the class-II aminoacyl-tRNA synthetase family. Homodimer. Mg(2+) is required as a cofactor.

The protein localises to the cytoplasm. It carries out the reaction tRNA(Lys) + L-lysine + ATP = L-lysyl-tRNA(Lys) + AMP + diphosphate. In Haemophilus influenzae (strain PittGG), this protein is Lysine--tRNA ligase.